Reading from the N-terminus, the 235-residue chain is Ribonuclease 3 (235 aa).

The RNase III domain occupies 7 to 134; the sequence is LKDLQNKIEI…LIASIYLDKG (128 aa). Residue glutamate 47 participates in Mg(2+) binding. Residue aspartate 51 is part of the active site. Mg(2+)-binding residues include aspartate 120 and glutamate 123. Glutamate 123 is an active-site residue. Residues 161 to 230 enclose the DRBM domain; the sequence is DYKTKLQEII…AKKAIENMEV (70 aa).

It belongs to the ribonuclease III family. In terms of assembly, homodimer. Requires Mg(2+) as cofactor.

It localises to the cytoplasm. The enzyme catalyses Endonucleolytic cleavage to 5'-phosphomonoester.. Its function is as follows. Digests double-stranded RNA. Involved in the processing of primary rRNA transcript to yield the immediate precursors to the large and small rRNAs (23S and 16S). Processes some mRNAs, and tRNAs when they are encoded in the rRNA operon. Processes pre-crRNA and tracrRNA of type II CRISPR loci if present in the organism. This chain is Ribonuclease 3, found in Clostridium tetani (strain Massachusetts / E88).